The chain runs to 512 residues: 2,3-bisphosphoglycerate-independent phosphoglycerate mutase (512 aa).

2 residues coordinate Mn(2+): aspartate 12 and serine 62. Serine 62 acts as the Phosphoserine intermediate in catalysis. Substrate is bound by residues histidine 123, 153 to 154 (RD), arginine 185, arginine 191, 260 to 263 (RPDR), and lysine 333. Positions 400, 404, 441, 442, and 460 each coordinate Mn(2+).

It belongs to the BPG-independent phosphoglycerate mutase family. Monomer. The cofactor is Mn(2+).

It catalyses the reaction (2R)-2-phosphoglycerate = (2R)-3-phosphoglycerate. It participates in carbohydrate degradation; glycolysis; pyruvate from D-glyceraldehyde 3-phosphate: step 3/5. In terms of biological role, catalyzes the interconversion of 2-phosphoglycerate and 3-phosphoglycerate. The polypeptide is 2,3-bisphosphoglycerate-independent phosphoglycerate mutase (Clostridium perfringens (strain ATCC 13124 / DSM 756 / JCM 1290 / NCIMB 6125 / NCTC 8237 / Type A)).